Consider the following 433-residue polypeptide: Xylose isomerase (433 aa).

Residues histidine 99 and aspartate 102 contribute to the active site. Mg(2+)-binding residues include glutamate 230, glutamate 266, histidine 269, aspartate 294, aspartate 305, aspartate 307, and aspartate 337.

The protein belongs to the xylose isomerase family. As to quaternary structure, homotetramer. Requires Mg(2+) as cofactor.

The protein resides in the cytoplasm. It carries out the reaction alpha-D-xylose = alpha-D-xylulofuranose. The polypeptide is Xylose isomerase (Cereibacter sphaeroides (strain ATCC 17029 / ATH 2.4.9) (Rhodobacter sphaeroides)).